The sequence spans 314 residues: 4-hydroxy-3-methylbut-2-enyl diphosphate reductase (314 aa).

[4Fe-4S] cluster is bound at residue cysteine 12. Positions 43 and 81 each coordinate (2E)-4-hydroxy-3-methylbut-2-enyl diphosphate. Dimethylallyl diphosphate is bound by residues histidine 43 and histidine 81. Residues histidine 43 and histidine 81 each contribute to the isopentenyl diphosphate site. A [4Fe-4S] cluster-binding site is contributed by cysteine 103. Histidine 131 contributes to the (2E)-4-hydroxy-3-methylbut-2-enyl diphosphate binding site. Histidine 131 lines the dimethylallyl diphosphate pocket. Histidine 131 serves as a coordination point for isopentenyl diphosphate. Glutamate 133 functions as the Proton donor in the catalytic mechanism. Threonine 170 contributes to the (2E)-4-hydroxy-3-methylbut-2-enyl diphosphate binding site. Residue cysteine 198 coordinates [4Fe-4S] cluster. Positions 226, 228, and 271 each coordinate (2E)-4-hydroxy-3-methylbut-2-enyl diphosphate. Dimethylallyl diphosphate contacts are provided by serine 226, asparagine 228, and serine 271. Serine 226, asparagine 228, and serine 271 together coordinate isopentenyl diphosphate.

The protein belongs to the IspH family. It depends on [4Fe-4S] cluster as a cofactor.

It carries out the reaction isopentenyl diphosphate + 2 oxidized [2Fe-2S]-[ferredoxin] + H2O = (2E)-4-hydroxy-3-methylbut-2-enyl diphosphate + 2 reduced [2Fe-2S]-[ferredoxin] + 2 H(+). It catalyses the reaction dimethylallyl diphosphate + 2 oxidized [2Fe-2S]-[ferredoxin] + H2O = (2E)-4-hydroxy-3-methylbut-2-enyl diphosphate + 2 reduced [2Fe-2S]-[ferredoxin] + 2 H(+). It functions in the pathway isoprenoid biosynthesis; dimethylallyl diphosphate biosynthesis; dimethylallyl diphosphate from (2E)-4-hydroxy-3-methylbutenyl diphosphate: step 1/1. It participates in isoprenoid biosynthesis; isopentenyl diphosphate biosynthesis via DXP pathway; isopentenyl diphosphate from 1-deoxy-D-xylulose 5-phosphate: step 6/6. In terms of biological role, catalyzes the conversion of 1-hydroxy-2-methyl-2-(E)-butenyl 4-diphosphate (HMBPP) into a mixture of isopentenyl diphosphate (IPP) and dimethylallyl diphosphate (DMAPP). Acts in the terminal step of the DOXP/MEP pathway for isoprenoid precursor biosynthesis. In Shouchella clausii (strain KSM-K16) (Alkalihalobacillus clausii), this protein is 4-hydroxy-3-methylbut-2-enyl diphosphate reductase.